Consider the following 137-residue polypeptide: Large ribosomal subunit protein uL16 (137 aa).

Belongs to the universal ribosomal protein uL16 family. In terms of assembly, part of the 50S ribosomal subunit.

Functionally, binds 23S rRNA and is also seen to make contacts with the A and possibly P site tRNAs. This chain is Large ribosomal subunit protein uL16, found in Streptococcus agalactiae serotype Ia (strain ATCC 27591 / A909 / CDC SS700).